The sequence spans 344 residues: Hypoxia-inducible factor 1-alpha inhibitor (344 aa).

Ala2 carries the N-acetylalanine modification. The 171-residue stretch at 133–303 (GRVYLQQTLN…PKRIEYPLKA (171 aa)) folds into the JmjC domain. A 2-oxoglutarate-binding site is contributed by Tyr136. Residues Asp143 and 173 to 174 (LT) contribute to the substrate site. Thr187 lines the 2-oxoglutarate pocket. Residues His190 and Asp192 each contribute to the Fe cation site. 192–194 (DEQ) serves as a coordination point for substrate. 2-oxoglutarate-binding residues include Asn196 and Lys205. 229–230 (RQ) serves as a coordination point for substrate. His270 serves as a coordination point for Fe cation. A 2-oxoglutarate-binding site is contributed by Asn285. Ala291 and Asn312 together coordinate substrate.

In terms of assembly, homodimer; homodimerization is essential for catalytic activity. Requires Fe(2+) as cofactor.

The protein localises to the nucleus. It is found in the cytoplasm. It localises to the perinuclear region. The catalysed reaction is L-asparaginyl-[hypoxia-inducible factor alpha subunit] + 2-oxoglutarate + O2 = (3S)-3-hydroxy-L-asparaginyl-[hypoxia-inducible factor alpha subunit] + succinate + CO2. It catalyses the reaction L-histidyl-[ankyrin-repeat domain protein] + 2-oxoglutarate + O2 = (3S)-3-hydroxy-L-histidyl-[ankyrin-repeat domain protein] + succinate + CO2. It carries out the reaction L-asparaginyl-[ankyrin-repeat domain protein] + 2-oxoglutarate + O2 = (3S)-3-hydroxy-L-asparaginyl-[ankyrin-repeat domain protein] + succinate + CO2. The enzyme catalyses L-aspartyl-[ankyrin-repeat domain protein] + 2-oxoglutarate + O2 = (3S)-3-hydroxy-L-aspartyl-[ankyrin-repeat domain protein] + succinate + CO2. In terms of biological role, hydroxylates a specific Asn residue in the C-terminal transactivation domain (CAD) of HIF-1 alpha. The hydroxylation prevents interaction of HIF-1 with transcriptional coactivators. Also hydroxylates specific Asn, Asp and His residues within ankyrin repeat domain-containing proteins. The protein is Hypoxia-inducible factor 1-alpha inhibitor (hif1an) of Danio rerio (Zebrafish).